We begin with the raw amino-acid sequence, 378 residues long: Lipid-A-disaccharide synthase (378 aa).

Belongs to the LpxB family.

It carries out the reaction a lipid X + a UDP-2-N,3-O-bis[(3R)-3-hydroxyacyl]-alpha-D-glucosamine = a lipid A disaccharide + UDP + H(+). Its pathway is bacterial outer membrane biogenesis; LPS lipid A biosynthesis. In terms of biological role, condensation of UDP-2,3-diacylglucosamine and 2,3-diacylglucosamine-1-phosphate to form lipid A disaccharide, a precursor of lipid A, a phosphorylated glycolipid that anchors the lipopolysaccharide to the outer membrane of the cell. The sequence is that of Lipid-A-disaccharide synthase from Methylobacillus flagellatus (strain ATCC 51484 / DSM 6875 / VKM B-1610 / KT).